We begin with the raw amino-acid sequence, 188 residues long: Elongation factor P (188 aa).

This sequence belongs to the elongation factor P family.

It is found in the cytoplasm. The protein operates within protein biosynthesis; polypeptide chain elongation. Its function is as follows. Involved in peptide bond synthesis. Stimulates efficient translation and peptide-bond synthesis on native or reconstituted 70S ribosomes in vitro. Probably functions indirectly by altering the affinity of the ribosome for aminoacyl-tRNA, thus increasing their reactivity as acceptors for peptidyl transferase. The protein is Elongation factor P of Parabacteroides distasonis (strain ATCC 8503 / DSM 20701 / CIP 104284 / JCM 5825 / NCTC 11152).